The sequence spans 247 residues: NAD(P)H-quinone oxidoreductase subunit K (247 aa).

[4Fe-4S] cluster-binding residues include Cys-63, Cys-64, Cys-128, and Cys-159. The interval 218 to 247 (TRQAPPKELTEAIGMEVPPALASQKQKEEA) is disordered.

It belongs to the complex I 20 kDa subunit family. As to quaternary structure, NDH-1 can be composed of about 15 different subunits; different subcomplexes with different compositions have been identified which probably have different functions. [4Fe-4S] cluster serves as cofactor.

Its subcellular location is the cellular thylakoid membrane. The catalysed reaction is a plastoquinone + NADH + (n+1) H(+)(in) = a plastoquinol + NAD(+) + n H(+)(out). It carries out the reaction a plastoquinone + NADPH + (n+1) H(+)(in) = a plastoquinol + NADP(+) + n H(+)(out). Functionally, NDH-1 shuttles electrons from an unknown electron donor, via FMN and iron-sulfur (Fe-S) centers, to quinones in the respiratory and/or the photosynthetic chain. The immediate electron acceptor for the enzyme in this species is believed to be plastoquinone. Couples the redox reaction to proton translocation, and thus conserves the redox energy in a proton gradient. Cyanobacterial NDH-1 also plays a role in inorganic carbon-concentration. This Crocosphaera subtropica (strain ATCC 51142 / BH68) (Cyanothece sp. (strain ATCC 51142)) protein is NAD(P)H-quinone oxidoreductase subunit K.